We begin with the raw amino-acid sequence, 240 residues long: Small ribosomal subunit protein uS3 (240 aa).

The region spanning 39–107 (IREFIKEECK…ELHLNIVEVR (69 aa)) is the KH type-2 domain. Residues 212–222 (PQARDRRHAEL) are compositionally biased toward basic and acidic residues. The disordered stretch occupies residues 212–240 (PQARDRRHAELQEGGGPRPQGGGRPRRDR). Residues 224 to 234 (EGGGPRPQGGG) are compositionally biased toward gly residues.

The protein belongs to the universal ribosomal protein uS3 family. In terms of assembly, part of the 30S ribosomal subunit. Forms a tight complex with proteins S10 and S14.

In terms of biological role, binds the lower part of the 30S subunit head. Binds mRNA in the 70S ribosome, positioning it for translation. The chain is Small ribosomal subunit protein uS3 from Dinoroseobacter shibae (strain DSM 16493 / NCIMB 14021 / DFL 12).